Here is a 478-residue protein sequence, read N- to C-terminus: RNA-binding protein 42 (478 aa).

A compositionally biased stretch (low complexity) spans 1 to 20 (MASAMAGAGPAPGLPVAGGP). The disordered stretch occupies residues 1–33 (MASAMAGAGPAPGLPVAGGPVVPGPGVGIPGKS). Ala2 carries the post-translational modification N-acetylalanine. Residue Ser133 is modified to Phosphoserine. Residues Arg151, Arg156, Arg166, and Arg179 each carry the asymmetric dimethylarginine modification. 2 disordered regions span residues 171 to 207 (LSSA…MLPP) and 317 to 354 (SLRP…PEKL). The span at 193-205 (PPLPGPPGPPMML) shows a compositional bias: pro residues. The necessary for interaction with HNRNPK stretch occupies residues 234–478 (ELGLGLGLGL…QKEKKKLGLR (245 aa)). Residues 343 to 354 (GEDKKKGKPEKL) are compositionally biased toward basic and acidic residues. Residues 379-457 (FRIFCGDLGN…RPIKLRKSMW (79 aa)) enclose the RRM domain.

This sequence belongs to the RRM RBM42 family. In terms of assembly, interacts with HNRNPK. In terms of tissue distribution, expressed in cell lines (at protein level). Expressed in heart, brain, spleen, lung, liver, skeletal muscle, kidney and testis.

The protein localises to the nucleus. It is found in the cytoplasm. Its function is as follows. Binds (via the RRM domain) to the 3'-untranslated region (UTR) of CDKN1A mRNA. The protein is RNA-binding protein 42 (Rbm42) of Mus musculus (Mouse).